Consider the following 686-residue polypeptide: Translation initiation factor IF-2 (686 aa).

Residues 53-105 (EKPSVADEFEVEEKVVRSKKNSNKKKKKGKGNEDKRQENFAGRQQTQTVETPD) form a disordered region. Residues 69–81 (RSKKNSNKKKKKG) are compositionally biased toward basic residues. The tr-type G domain maps to 188 to 357 (ERPAVVTIMG…LLVSEVEEYK (170 aa)). A G1 region spans residues 197 to 204 (GHVDHGKT). Residue 197–204 (GHVDHGKT) coordinates GTP. Residues 222 to 226 (GITQH) form a G2 region. The interval 243 to 246 (DTPG) is G3. GTP is bound by residues 243-247 (DTPGH) and 297-300 (NKMD). The G4 stretch occupies residues 297-300 (NKMD). A G5 region spans residues 333–335 (SAI).

The protein belongs to the TRAFAC class translation factor GTPase superfamily. Classic translation factor GTPase family. IF-2 subfamily.

The protein resides in the cytoplasm. Functionally, one of the essential components for the initiation of protein synthesis. Protects formylmethionyl-tRNA from spontaneous hydrolysis and promotes its binding to the 30S ribosomal subunits. Also involved in the hydrolysis of GTP during the formation of the 70S ribosomal complex. The polypeptide is Translation initiation factor IF-2 (Bacillus cereus (strain ATCC 10987 / NRS 248)).